Reading from the N-terminus, the 530-residue chain is CTP synthase (530 aa).

Positions 1–264 (MPKLIIVTGG…GDFLTRRLRL (264 aa)) are amidoligase domain. S13 lines the CTP pocket. S13 serves as a coordination point for UTP. 14 to 19 (GVGKGV) contributes to the ATP binding site. Y54 provides a ligand contact to L-glutamine. Residue D71 coordinates ATP. D71 and E139 together coordinate Mg(2+). Residues 146 to 148 (DYE), 185 to 190 (KTKPLQ), and K221 contribute to the CTP site. Residues 185-190 (KTKPLQ) and K221 contribute to the UTP site. The Glutamine amidotransferase type-1 domain occupies 289–530 (SVGMCGKYVE…LLKAALFAKR (242 aa)). Residue G351 coordinates L-glutamine. The active-site Nucleophile; for glutamine hydrolysis is the C378. L-glutamine is bound by residues 379-382 (FGMQ), E402, and R459. Catalysis depends on residues H504 and E506.

Belongs to the CTP synthase family. In terms of assembly, homotetramer.

It carries out the reaction UTP + L-glutamine + ATP + H2O = CTP + L-glutamate + ADP + phosphate + 2 H(+). The enzyme catalyses L-glutamine + H2O = L-glutamate + NH4(+). The catalysed reaction is UTP + NH4(+) + ATP = CTP + ADP + phosphate + 2 H(+). It functions in the pathway pyrimidine metabolism; CTP biosynthesis via de novo pathway; CTP from UDP: step 2/2. Allosterically activated by GTP, when glutamine is the substrate; GTP has no effect on the reaction when ammonia is the substrate. The allosteric effector GTP functions by stabilizing the protein conformation that binds the tetrahedral intermediate(s) formed during glutamine hydrolysis. Inhibited by the product CTP, via allosteric rather than competitive inhibition. In terms of biological role, catalyzes the ATP-dependent amination of UTP to CTP with either L-glutamine or ammonia as the source of nitrogen. Regulates intracellular CTP levels through interactions with the four ribonucleotide triphosphates. In Pyrobaculum aerophilum (strain ATCC 51768 / DSM 7523 / JCM 9630 / CIP 104966 / NBRC 100827 / IM2), this protein is CTP synthase.